The following is a 257-amino-acid chain: Phycoerythrobilin:ferredoxin oxidoreductase (257 aa).

It belongs to the HY2 family.

It carries out the reaction (3Z)-phycoerythrobilin + oxidized 2[4Fe-4S]-[ferredoxin] = 15,16-dihydrobiliverdin + reduced 2[4Fe-4S]-[ferredoxin] + 2 H(+). Functionally, catalyzes the two-electron reduction of the C2 and C3(1) diene system of 15,16-dihydrobiliverdin. This Synechococcus sp. (strain CC9902) protein is Phycoerythrobilin:ferredoxin oxidoreductase.